The primary structure comprises 147 residues: MKVISENRKGLYGYKIIEKHEAGISLLGWEVKSARAQTVNLTNSYIFFKKGELFLCNANFAKYMLLKVEEDRDRKLLMHKKEIIRLKNKLDRLSSTTIKPTKIYFNNKSKIKVEIALVQGMNRADKREDLKKRDNEKYMQKVKSNYL.

Belongs to the SmpB family.

Its subcellular location is the cytoplasm. In terms of biological role, required for rescue of stalled ribosomes mediated by trans-translation. Binds to transfer-messenger RNA (tmRNA), required for stable association of tmRNA with ribosomes. tmRNA and SmpB together mimic tRNA shape, replacing the anticodon stem-loop with SmpB. tmRNA is encoded by the ssrA gene; the 2 termini fold to resemble tRNA(Ala) and it encodes a 'tag peptide', a short internal open reading frame. During trans-translation Ala-aminoacylated tmRNA acts like a tRNA, entering the A-site of stalled ribosomes, displacing the stalled mRNA. The ribosome then switches to translate the ORF on the tmRNA; the nascent peptide is terminated with the 'tag peptide' encoded by the tmRNA and targeted for degradation. The ribosome is freed to recommence translation, which seems to be the essential function of trans-translation. In Mycoplasmopsis agalactiae (strain NCTC 10123 / CIP 59.7 / PG2) (Mycoplasma agalactiae), this protein is SsrA-binding protein.